The primary structure comprises 88 residues: uncharacterized protein (88 aa).

This is an uncharacterized protein from Archaeoglobus fulgidus (strain ATCC 49558 / DSM 4304 / JCM 9628 / NBRC 100126 / VC-16).